The chain runs to 91 residues: MSRTIFCTFLQREAEGQDFQLYPGELGKRIYNEISKEAWAQWQHKQTMLINEKKLNMMNAEHRKLLEQEMVNFLFEGKEVHIEGYTPEDKK.

The protein belongs to the Fe(2+)-trafficking protein family. As to quaternary structure, monomer.

Functionally, could be a mediator in iron transactions between iron acquisition and iron-requiring processes, such as synthesis and/or repair of Fe-S clusters in biosynthetic enzymes. This Escherichia coli O7:K1 (strain IAI39 / ExPEC) protein is Probable Fe(2+)-trafficking protein.